Consider the following 426-residue polypeptide: Cytochrome b-c1 complex subunit 2, mitochondrial (426 aa).

Residues 1–30 constitute a mitochondrion transit peptide; the sequence is MKSFTRNLRRFQTPRRNLHGISYTPKKVEG.

Belongs to the peptidase M16 family. UQCRC2/QCR2 subfamily. Component of the ubiquinol-cytochrome c oxidoreductase (cytochrome b-c1 complex, complex III, CIII), a multisubunit enzyme composed of 3 respiratory subunits cytochrome b, cytochrome c1 and Rieske protein, 2 core protein subunits, and additional low-molecular weight protein subunits. The complex exists as an obligatory dimer and forms supercomplexes (SCs) in the inner mitochondrial membrane with cytochrome c oxidase (complex IV, CIV).

The protein resides in the mitochondrion inner membrane. Functionally, component of the ubiquinol-cytochrome c oxidoreductase, a multisubunit transmembrane complex that is part of the mitochondrial electron transport chain which drives oxidative phosphorylation. The respiratory chain contains 3 multisubunit complexes succinate dehydrogenase (complex II, CII), ubiquinol-cytochrome c oxidoreductase (cytochrome b-c1 complex, complex III, CIII) and cytochrome c oxidase (complex IV, CIV), that cooperate to transfer electrons derived from NADH and succinate to molecular oxygen, creating an electrochemical gradient over the inner membrane that drives transmembrane transport and the ATP synthase. The cytochrome b-c1 complex catalyzes electron transfer from ubiquinol to cytochrome c, linking this redox reaction to translocation of protons across the mitochondrial inner membrane, with protons being carried across the membrane as hydrogens on the quinol. In the process called Q cycle, 2 protons are consumed from the matrix, 4 protons are released into the intermembrane space and 2 electrons are passed to cytochrome c. This chain is Cytochrome b-c1 complex subunit 2, mitochondrial (qcr2), found in Schizosaccharomyces pombe (strain 972 / ATCC 24843) (Fission yeast).